A 440-amino-acid polypeptide reads, in one-letter code: GTPase Der (440 aa).

2 EngA-type G domains span residues 3–167 (PIIA…PYDR) and 176–351 (TRIA…EQYC). GTP-binding positions include 9 to 16 (GRPNVGKS), 56 to 60 (DTGGF), 119 to 122 (NKVD), 182 to 189 (GRPNVGKS), 229 to 233 (DTAGI), and 294 to 297 (NKWD). The 85-residue stretch at 352–436 (KRVTTGELNR…PLKLIFRGRD (85 aa)) folds into the KH-like domain.

Belongs to the TRAFAC class TrmE-Era-EngA-EngB-Septin-like GTPase superfamily. EngA (Der) GTPase family. As to quaternary structure, associates with the 50S ribosomal subunit.

Its function is as follows. GTPase that plays an essential role in the late steps of ribosome biogenesis. The protein is GTPase Der of Citrifermentans bemidjiense (strain ATCC BAA-1014 / DSM 16622 / JCM 12645 / Bem) (Geobacter bemidjiensis).